The following is a 246-amino-acid chain: 3-deoxy-manno-octulosonate cytidylyltransferase (246 aa).

It belongs to the KdsB family.

It localises to the cytoplasm. The catalysed reaction is 3-deoxy-alpha-D-manno-oct-2-ulosonate + CTP = CMP-3-deoxy-beta-D-manno-octulosonate + diphosphate. It functions in the pathway nucleotide-sugar biosynthesis; CMP-3-deoxy-D-manno-octulosonate biosynthesis; CMP-3-deoxy-D-manno-octulosonate from 3-deoxy-D-manno-octulosonate and CTP: step 1/1. Its pathway is bacterial outer membrane biogenesis; lipopolysaccharide biosynthesis. In terms of biological role, activates KDO (a required 8-carbon sugar) for incorporation into bacterial lipopolysaccharide in Gram-negative bacteria. This Leptospira biflexa serovar Patoc (strain Patoc 1 / Ames) protein is 3-deoxy-manno-octulosonate cytidylyltransferase.